We begin with the raw amino-acid sequence, 296 residues long: Stanniocalcin-2 (296 aa).

Positions 1–24 (MCAERLGQFVTLALVFATLDPARG) are cleaved as a signal peptide. The segment at 22-44 (ARGTDSTNPPEGPQDRGSQQKGR) is disordered. Asparagine 73 carries N-linked (GlcNAc...) asparagine glycosylation. Residues 236-296 (RPYHRDTDHH…EQSEYSDIRR (61 aa)) form a disordered region. Basic and acidic residues predominate over residues 238–258 (YHRDTDHHLTANRGAKGERGS).

Belongs to the stanniocalcin family. As to quaternary structure, homodimer; disulfide-linked. As to expression, expressed in a variety of tissues. Strongly expressed in ovary and to a lesser extent in kidney.

It is found in the secreted. Has an anti-hypocalcemic action on calcium and phosphate homeostasis. This chain is Stanniocalcin-2 (Stc2), found in Rattus norvegicus (Rat).